Reading from the N-terminus, the 365-residue chain is Putative outer membrane porin protein NmpC (365 aa).

An N-terminal signal peptide occupies residues 1 to 23 (MKKLTVAISAVAASVLMAMSAQA).

This sequence belongs to the Gram-negative porin family. Homotrimer.

It is found in the cell outer membrane. This chain is Putative outer membrane porin protein NmpC (nmpC), found in Escherichia coli (strain K12).